Reading from the N-terminus, the 97-residue chain is Peptide YY (97 aa).

The first 28 residues, 1–28, serve as a signal peptide directing secretion; it reads MVFVRRPWPALTTVLLALLVCLGALVDA. Phosphoserine is present on Ser-41. Tyrosine amide is present on Tyr-64. The tract at residues 65-97 is disordered; sequence GKRDGPDTLLSKTFFPDGEDRPVRSRSEGPDLW. Residues 68 to 97 constitute a propeptide that is removed on maturation; sequence DGPDTLLSKTFFPDGEDRPVRSRSEGPDLW. The segment covering 82-97 has biased composition (basic and acidic residues); sequence GEDRPVRSRSEGPDLW.

It belongs to the NPY family. The peptide YY form is cleaved at Pro-30 by the prolyl endopeptidase FAP (seprase) activity (in vitro) to generate peptide YY(3-36).

It is found in the secreted. This gut peptide inhibits exocrine pancreatic secretion, has a vasoconstrictory action and inhibitis jejunal and colonic mobility. The polypeptide is Peptide YY (PYY) (Homo sapiens (Human)).